We begin with the raw amino-acid sequence, 417 residues long: CinA-like protein (417 aa).

The protein belongs to the CinA family.

This Gloeothece citriformis (strain PCC 7424) (Cyanothece sp. (strain PCC 7424)) protein is CinA-like protein.